The chain runs to 114 residues: U17-barytoxin-Tl1d (114 aa).

The signal sequence occupies residues 1–20; that stretch reads MKTIIVFLSLLVLATKFGDA. A propeptide spanning residues 21–74 is cleaved from the precursor; it reads NEGVNQEQMKEVIQNEFREDFLNEMAAMSLLQQLEAIESTLLEKEADRNSRQKR. Intrachain disulfides connect Cys-75–Cys-88, Cys-82–Cys-93, and Cys-87–Cys-108.

It belongs to the neurotoxin 14 (magi-1) family. 03 (ICK-30-40) subfamily. As to expression, expressed by the venom gland.

It is found in the secreted. In terms of biological role, ion channel inhibitor. This Trittame loki (Brush-footed trapdoor spider) protein is U17-barytoxin-Tl1d.